Consider the following 534-residue polypeptide: Ethanolamine kinase (534 aa).

Phosphoserine is present on Ser-23.

This sequence belongs to the choline/ethanolamine kinase family.

The protein resides in the cytoplasm. It carries out the reaction ethanolamine + ATP = phosphoethanolamine + ADP + H(+). It catalyses the reaction choline + ATP = phosphocholine + ADP + H(+). It functions in the pathway phospholipid metabolism; phosphatidylethanolamine biosynthesis; phosphatidylethanolamine from ethanolamine: step 1/3. Catalyzes the committed step of phosphatidylethanolamine synthesis via the CDP-ethanolamine branch of the Kennedy pathway. Also exhibits choline kinase activity, thus contributing to phosphatidylcholine synthesis via the CDP-choline pathway, but its preferred substrate is ethanolamine. The sequence is that of Ethanolamine kinase (EKI1) from Saccharomyces cerevisiae (strain ATCC 204508 / S288c) (Baker's yeast).